Here is a 443-residue protein sequence, read N- to C-terminus: Signal recognition particle 54 kDa protein (443 aa).

GTP-binding positions include 107 to 114 (GVQGSGKT), 189 to 193 (DTAGR), and 247 to 250 (TKLD).

This sequence belongs to the GTP-binding SRP family. SRP54 subfamily. As to quaternary structure, part of the signal recognition particle protein translocation system, which is composed of SRP and FtsY. Archaeal SRP consists of a 7S RNA molecule of 300 nucleotides and two protein subunits: SRP54 and SRP19.

Its subcellular location is the cytoplasm. It carries out the reaction GTP + H2O = GDP + phosphate + H(+). Functionally, involved in targeting and insertion of nascent membrane proteins into the cytoplasmic membrane. Binds to the hydrophobic signal sequence of the ribosome-nascent chain (RNC) as it emerges from the ribosomes. The SRP-RNC complex is then targeted to the cytoplasmic membrane where it interacts with the SRP receptor FtsY. This Pyrococcus horikoshii (strain ATCC 700860 / DSM 12428 / JCM 9974 / NBRC 100139 / OT-3) protein is Signal recognition particle 54 kDa protein.